The primary structure comprises 318 residues: Porphobilinogen deaminase (318 aa).

C248 carries the post-translational modification S-(dipyrrolylmethanemethyl)cysteine.

It belongs to the HMBS family. In terms of assembly, monomer. Requires dipyrromethane as cofactor.

The catalysed reaction is 4 porphobilinogen + H2O = hydroxymethylbilane + 4 NH4(+). It participates in porphyrin-containing compound metabolism; protoporphyrin-IX biosynthesis; coproporphyrinogen-III from 5-aminolevulinate: step 2/4. Tetrapolymerization of the monopyrrole PBG into the hydroxymethylbilane pre-uroporphyrinogen in several discrete steps. This Caulobacter sp. (strain K31) protein is Porphobilinogen deaminase.